The sequence spans 81 residues: Small ribosomal subunit protein uS17 (81 aa).

The protein belongs to the universal ribosomal protein uS17 family. As to quaternary structure, part of the 30S ribosomal subunit.

Its function is as follows. One of the primary rRNA binding proteins, it binds specifically to the 5'-end of 16S ribosomal RNA. In Hyphomonas neptunium (strain ATCC 15444), this protein is Small ribosomal subunit protein uS17.